We begin with the raw amino-acid sequence, 337 residues long: MDLDQIVADAQQSFEQAADITTLENEKARFLGKSGALTELLKGLGKLDPEARKTEGARINVAKQQVEAALTARRQALADALLNQRLAAEAIDVTLPGRGAGAGSLHPVMRTWERVEQIFRSIGFDVADGPEIETDWYNFTSLNSPENHPARSMQDTFYVEGKDADGRQLLLRTHTSPMQVRYARMNRPPIKVIAPGRTYRVDSDATHSPMFNQVEGLWIDENISFADLKGVYTDFLKKFFERDDILVRFRPSYFPFTEPSAEIDMMFEHGKNAGKWLEISGSGQVHPTVIRNMGLDPERYIGFAFGSGLERLTMLRYGVQDLRLFFENDLRFLRQFA.

Glutamate 258 is a Mg(2+) binding site.

The protein belongs to the class-II aminoacyl-tRNA synthetase family. Phe-tRNA synthetase alpha subunit type 1 subfamily. As to quaternary structure, tetramer of two alpha and two beta subunits. Mg(2+) serves as cofactor.

It localises to the cytoplasm. The enzyme catalyses tRNA(Phe) + L-phenylalanine + ATP = L-phenylalanyl-tRNA(Phe) + AMP + diphosphate + H(+). The sequence is that of Phenylalanine--tRNA ligase alpha subunit from Burkholderia vietnamiensis (strain G4 / LMG 22486) (Burkholderia cepacia (strain R1808)).